A 168-amino-acid chain; its full sequence is Nascent polypeptide-associated complex subunit alpha (168 aa).

The NAC-A/B domain maps to 14-78; the sequence is SKNEKKAREL…PKVDDFTRRL (65 aa). The interval 83–129 is disordered; that stretch reads QQAASAAKDPQSIQADMAAAAAAPAAPAAPAAAPEEDEAGQVDESGL. Positions 100-115 are enriched in low complexity; that stretch reads AAAAAAPAAPAAPAAA. The region spanning 129 to 168 is the UBA domain; sequence LDGQDIELVMQQANVSRNKAVKALREHNSDIVNAIMSLSK.

It belongs to the NAC-alpha family. In terms of assembly, part of the nascent polypeptide-associated complex (NAC), consisting of EGD2 and EGD1. NAC associates with ribosomes via EGD1.

It is found in the cytoplasm. Its subcellular location is the nucleus. Component of the nascent polypeptide-associated complex (NAC), a dynamic component of the ribosomal exit tunnel, protecting the emerging polypeptides from interaction with other cytoplasmic proteins to ensure appropriate nascent protein targeting. The NAC complex also promotes mitochondrial protein import by enhancing productive ribosome interactions with the outer mitochondrial membrane and blocks the inappropriate interaction of ribosomes translating non-secretory nascent polypeptides with translocation sites in the membrane of the endoplasmic reticulum. EGD2 may also be involved in transcription regulation. This chain is Nascent polypeptide-associated complex subunit alpha (EGD2), found in Eremothecium gossypii (strain ATCC 10895 / CBS 109.51 / FGSC 9923 / NRRL Y-1056) (Yeast).